The chain runs to 429 residues: Glutamate-1-semialdehyde 2,1-aminomutase (429 aa).

Lys267 carries the N6-(pyridoxal phosphate)lysine modification.

Belongs to the class-III pyridoxal-phosphate-dependent aminotransferase family. HemL subfamily. In terms of assembly, homodimer. It depends on pyridoxal 5'-phosphate as a cofactor.

The protein resides in the cytoplasm. The enzyme catalyses (S)-4-amino-5-oxopentanoate = 5-aminolevulinate. It participates in porphyrin-containing compound metabolism; protoporphyrin-IX biosynthesis; 5-aminolevulinate from L-glutamyl-tRNA(Glu): step 2/2. In Xanthomonas oryzae pv. oryzae (strain PXO99A), this protein is Glutamate-1-semialdehyde 2,1-aminomutase.